The primary structure comprises 94 residues: Non-specific lipid-transfer protein C4 (94 aa).

An N-terminal signal peptide occupies residues 1-26; the sequence is MAASKGNAAAAACALVLVLLAVGAEA. Cystine bridges form between C34-C72, C44-C59, C60-C85, and C70-C92. The N-linked (GlcNAc...) asparagine glycan is linked to N91.

This sequence belongs to the plant LTP family.

Functionally, lipid-transfer protein that may be regulated by the transcription factor UDT1 in developing anthers and play a role in tapetum development. In Oryza sativa subsp. japonica (Rice), this protein is Non-specific lipid-transfer protein C4.